The following is a 137-amino-acid chain: uncharacterized protein (137 aa).

A helical transmembrane segment spans residues Leu111–Leu131.

It is found in the membrane. This is an uncharacterized protein from Saccharomyces cerevisiae (strain ATCC 204508 / S288c) (Baker's yeast).